A 330-amino-acid polypeptide reads, in one-letter code: Aspartate--ammonia ligase (330 aa).

This sequence belongs to the class-II aminoacyl-tRNA synthetase family. AsnA subfamily. Homodimer.

The protein localises to the cytoplasm. It carries out the reaction L-aspartate + NH4(+) + ATP = L-asparagine + AMP + diphosphate + H(+). It participates in amino-acid biosynthesis; L-asparagine biosynthesis; L-asparagine from L-aspartate (ammonia route): step 1/1. The polypeptide is Aspartate--ammonia ligase (Salmonella typhimurium (strain LT2 / SGSC1412 / ATCC 700720)).